We begin with the raw amino-acid sequence, 297 residues long: 3-mercaptopyruvate sulfurtransferase (297 aa).

A2 carries the post-translational modification N-acetylalanine. One can recognise a Rhodanese 1 domain in the interval 25 to 144 (ASQPLKLLDA…WLSQNLPISS (120 aa)). Phosphoserine is present on S35. The residue at position 40 (K40) is an N6-acetyllysine; alternate. An N6-succinyllysine; alternate modification is found at K40. The segment at 145–160 (GKSPSEPAEFCAQLDP) is hinge. 2 positions are modified to N6-succinyllysine: K146 and K164. A Rhodanese 2 domain is found at 174–288 (DARRFQVVDA…WYMRAQPEHV (115 aa)). A substrate-binding site is contributed by R188. The active-site Cysteine persulfide intermediate is the C248.

As to quaternary structure, monomer (active form). Homodimer; disulfide-linked (inactive form). In terms of processing, the N-terminus is blocked. Expressed in liver, heart, kidney and brain. Localizes to tubular epithelium in the kidney, pericentral hepatocytes in the liver, cardiac cells in the heart and neuroglial cells in the brain. Also expressed in vascular endothelium of the thoracic aorta. Weak expression in lung and thymus.

Its subcellular location is the cytoplasm. The protein localises to the mitochondrion. The protein resides in the synapse. It is found in the synaptosome. The catalysed reaction is 2-oxo-3-sulfanylpropanoate + [thioredoxin]-dithiol = [thioredoxin]-disulfide + hydrogen sulfide + pyruvate + H(+). With respect to regulation, by oxidative stress, and thioredoxin. Under oxidative stress conditions, the catalytic cysteine site is converted to a sulfenate which inhibits the MPST enzyme activity. Reduced thioredoxin cleaves an intersubunit disulfide bond to turn on the redox switch and reactivate the enzyme. Inhibited by different oxidants, hydrogen peroxide and tetrathionate. In terms of biological role, transfer of a sulfur ion to cyanide or to other thiol compounds. Also has weak rhodanese activity. Detoxifies cyanide and is required for thiosulfate biosynthesis. Acts as an antioxidant. In combination with cysteine aminotransferase (CAT), contributes to the catabolism of cysteine and is an important producer of hydrogen sulfide in the brain, retina and vascular endothelial cells. Hydrogen sulfide H(2)S is an important synaptic modulator, signaling molecule, smooth muscle contractor and neuroprotectant. Its production by the 3MST/CAT pathway is regulated by calcium ions. This chain is 3-mercaptopyruvate sulfurtransferase (Mpst), found in Rattus norvegicus (Rat).